A 151-amino-acid chain; its full sequence is Large ribosomal subunit protein bL9 (151 aa).

This sequence belongs to the bacterial ribosomal protein bL9 family.

Binds to the 23S rRNA. This is Large ribosomal subunit protein bL9 from Lactobacillus delbrueckii subsp. bulgaricus (strain ATCC 11842 / DSM 20081 / BCRC 10696 / JCM 1002 / NBRC 13953 / NCIMB 11778 / NCTC 12712 / WDCM 00102 / Lb 14).